We begin with the raw amino-acid sequence, 199 residues long: MNDFTLNAEVRSDLGKGASRRLRRLASLVPAVVYGGDKAPESISMLAKEVAKLLENEAAYSHIIELNVGGTKQNVVIKALQRHPAKGHVMHADFVRVVAGQKLTAIVPVHFINEAAPVKKGGEISHVIAEIEVSCLPKDLPEFIEVDLADAEIGTIVHLSDIKAPKGVEFVALAHGNDLAVANVHAPRVAPEAAEGAAE.

Belongs to the bacterial ribosomal protein bL25 family. CTC subfamily. Part of the 50S ribosomal subunit; part of the 5S rRNA/L5/L18/L25 subcomplex. Contacts the 5S rRNA. Binds to the 5S rRNA independently of L5 and L18.

This is one of the proteins that binds to the 5S RNA in the ribosome where it forms part of the central protuberance. The sequence is that of Large ribosomal subunit protein bL25 from Pseudomonas fluorescens (strain ATCC BAA-477 / NRRL B-23932 / Pf-5).